Here is a 368-residue protein sequence, read N- to C-terminus: SH3 domain-containing protein 2 (368 aa).

Coiled coils occupy residues M1–A21 and L146–E210. The BAR domain occupies M1 to A264. Positions E258 to E281 are disordered. The SH3 domain maps to M299–R358.

As to quaternary structure, homodimer. Interacts with FREE1. Interacts (via SH3 domain) with ATG8E and ATG8F. Component of a phosphoinositide 3-kinase (PI3K) complex containing ATG6, SH3P2 and FREE1. Binds to SH3P3 and DRP1A. Forms a complex made of SH3P2 and DRP1A and triggers its accumulation at the cell plate. In terms of tissue distribution, highly expressed in seedlings. Detected in flowers, leaves and stems.

It is found in the cytoplasm. Its subcellular location is the cytoplasmic vesicle. It localises to the clathrin-coated vesicle. The protein localises to the cell membrane. The protein resides in the late endosome. It is found in the autophagosome membrane. Its function is as follows. Regulator for autophaosome formation and/or maturation. Binds phosphatidylinositol-phosphate; highest affinity for vesicles containing PtdIns(3,4,5)P(3), followed by those containing PtdIns(4,5)P(2) and PtdIns(3,4)P(2), with minimal binding to phosphatidylinositol monophosphates, including PtdIns(3)P. Together with DRP1A, converts the fused vesicles to tubular structures at the cell plate during cytokinesis. The sequence is that of SH3 domain-containing protein 2 from Arabidopsis thaliana (Mouse-ear cress).